A 508-amino-acid chain; its full sequence is Photosystem II CP47 reaction center protein (508 aa).

6 consecutive transmembrane segments (helical) span residues 21-36 (AVHI…WAGS), 101-115 (IVFS…IWHW), 140-156 (GIHL…FGAF), 203-218 (IAAG…FHLS), 237-252 (VLSS…AFVV), and 457-472 (SFAL…HGAR).

This sequence belongs to the PsbB/PsbC family. PsbB subfamily. PSII is composed of 1 copy each of membrane proteins PsbA, PsbB, PsbC, PsbD, PsbE, PsbF, PsbH, PsbI, PsbJ, PsbK, PsbL, PsbM, PsbT, PsbX, PsbY, PsbZ, Psb30/Ycf12, at least 3 peripheral proteins of the oxygen-evolving complex and a large number of cofactors. It forms dimeric complexes. Interacts with PAM68. Interacts with HHL1. Binds multiple chlorophylls. PSII binds additional chlorophylls, carotenoids and specific lipids. is required as a cofactor.

The protein localises to the plastid. Its subcellular location is the chloroplast thylakoid membrane. One of the components of the core complex of photosystem II (PSII). It binds chlorophyll and helps catalyze the primary light-induced photochemical processes of PSII. PSII is a light-driven water:plastoquinone oxidoreductase, using light energy to abstract electrons from H(2)O, generating O(2) and a proton gradient subsequently used for ATP formation. The chain is Photosystem II CP47 reaction center protein from Arabidopsis thaliana (Mouse-ear cress).